Consider the following 242-residue polypeptide: Adenosylcobinamide-GDP ribazoletransferase (242 aa).

Helical transmembrane passes span 31–51, 52–72, 109–129, 134–154, and 188–208; these read LLFY…LSTA, LMGA…VLLS, IAVV…VALI, GAAL…LFLT, and ILIG…CFIG.

It belongs to the CobS family. Mg(2+) serves as cofactor.

The protein localises to the cell inner membrane. It catalyses the reaction alpha-ribazole + adenosylcob(III)inamide-GDP = adenosylcob(III)alamin + GMP + H(+). It carries out the reaction alpha-ribazole 5'-phosphate + adenosylcob(III)inamide-GDP = adenosylcob(III)alamin 5'-phosphate + GMP + H(+). The protein operates within cofactor biosynthesis; adenosylcobalamin biosynthesis; adenosylcobalamin from cob(II)yrinate a,c-diamide: step 7/7. Functionally, joins adenosylcobinamide-GDP and alpha-ribazole to generate adenosylcobalamin (Ado-cobalamin). Also synthesizes adenosylcobalamin 5'-phosphate from adenosylcobinamide-GDP and alpha-ribazole 5'-phosphate. The sequence is that of Adenosylcobinamide-GDP ribazoletransferase from Pseudomonas fluorescens (strain SBW25).